The chain runs to 300 residues: GTPase Era (300 aa).

Positions 4-172 constitute an Era-type G domain; it reads KSGFVALAGK…LEKIKEELPE (169 aa). The tract at residues 12–19 is G1; sequence GKPNVGKS. Position 12–19 (12–19) interacts with GTP; the sequence is GKPNVGKS. Positions 38-42 are G2; the sequence is QTTRN. The segment at 59-62 is G3; sequence DTPG. GTP is bound by residues 59-63 and 121-124; these read DTPGI and NKID. The interval 121–124 is G4; it reads NKID. The interval 151 to 153 is G5; that stretch reads ISA. The KH type-2 domain maps to 195-280; it reads IREKIFHLTR…YLDLNVKVKE (86 aa).

This sequence belongs to the TRAFAC class TrmE-Era-EngA-EngB-Septin-like GTPase superfamily. Era GTPase family. Monomer.

The protein resides in the cytoplasm. The protein localises to the cell inner membrane. Its function is as follows. An essential GTPase that binds both GDP and GTP, with rapid nucleotide exchange. Plays a role in 16S rRNA processing and 30S ribosomal subunit biogenesis and possibly also in cell cycle regulation and energy metabolism. This Thermotoga maritima (strain ATCC 43589 / DSM 3109 / JCM 10099 / NBRC 100826 / MSB8) protein is GTPase Era.